A 205-amino-acid polypeptide reads, in one-letter code: MSGTTESQLNQLVGAMHLRHRFLGVFDKTFPGFLDPNRPASAIVNTGSRATGGMHWIAFAFDPIARKCYMFDPFGWSDRELWNLYKVKYDAFLRRTGLRQPDKCFELVRSVEAVQCPCSAACGLFSALFIASFDRYHTRPMDGNPIIDTVVGVKHSDMYKPEFQSILHRNQERMYFWFMKNNSFFRAHESELKRETAINSVPENH.

Residues His-55, Asp-72, and Cys-122 contribute to the active site.

This sequence belongs to the peptidase C5 family. In terms of assembly, interacts with protease cofactor pVI-C; this interaction is necessary for protease activation.

The protein resides in the virion. The protein localises to the host nucleus. It carries out the reaction Cleaves proteins of the adenovirus and its host cell at two consensus sites: -Yaa-Xaa-Gly-Gly-|-Xaa- and -Yaa-Xaa-Gly-Xaa-|-Gly- (in which Yaa is Met, Ile or Leu, and Xaa is any amino acid).. With respect to regulation, requires DNA and protease cofactor for maximal activation. Inside nascent virions, becomes partially activated by binding to the viral DNA, allowing it to cleave the cofactor that binds to the protease and fully activates it. Actin, like the viral protease cofactor, seems to act as a cofactor in the cleavage of cytokeratin 18 and of actin itself. Its function is as follows. Cleaves viral precursor proteins (pTP, pIIIa, pVI, pVII, pVIII, and pX) inside newly assembled particles giving rise to mature virions. Protease complexed to its cofactor slides along the viral DNA to specifically locate and cleave the viral precursors. Mature virions have a weakened organization compared to the unmature virions, thereby facilitating subsequent uncoating. Without maturation, the particle lacks infectivity and is unable to uncoat. Late in adenovirus infection, in the cytoplasm, may participate in the cytoskeleton destruction. Cleaves host cell cytoskeletal keratins K7 and K18. In Galliformes (FAdV-8), this protein is Protease.